Here is a 229-residue protein sequence, read N- to C-terminus: 5'-methylthioadenosine/S-adenosylhomocysteine nucleosidase (229 aa).

Residue Glu-12 is the Proton acceptor of the active site. Residues Gly-78, Ile-152, and 173–174 (ME) each bind substrate. Asp-197 serves as the catalytic Proton donor.

Belongs to the PNP/UDP phosphorylase family. MtnN subfamily.

The catalysed reaction is S-adenosyl-L-homocysteine + H2O = S-(5-deoxy-D-ribos-5-yl)-L-homocysteine + adenine. It catalyses the reaction S-methyl-5'-thioadenosine + H2O = 5-(methylsulfanyl)-D-ribose + adenine. The enzyme catalyses 5'-deoxyadenosine + H2O = 5-deoxy-D-ribose + adenine. It functions in the pathway amino-acid biosynthesis; L-methionine biosynthesis via salvage pathway; S-methyl-5-thio-alpha-D-ribose 1-phosphate from S-methyl-5'-thioadenosine (hydrolase route): step 1/2. Its function is as follows. Catalyzes the irreversible cleavage of the glycosidic bond in both 5'-methylthioadenosine (MTA) and S-adenosylhomocysteine (SAH/AdoHcy) to adenine and the corresponding thioribose, 5'-methylthioribose and S-ribosylhomocysteine, respectively. Also cleaves 5'-deoxyadenosine, a toxic by-product of radical S-adenosylmethionine (SAM) enzymes, into 5-deoxyribose and adenine. The protein is 5'-methylthioadenosine/S-adenosylhomocysteine nucleosidase of Baumannia cicadellinicola subsp. Homalodisca coagulata.